We begin with the raw amino-acid sequence, 123 residues long: uncharacterized protein (123 aa).

Residues 1 to 20 form the signal peptide; the sequence is MARTLALRASAGLVAGMAMA.

This is an uncharacterized protein from Mycobacterium bovis (strain ATCC BAA-935 / AF2122/97).